The primary structure comprises 228 residues: 7-cyano-7-deazaguanine synthase (228 aa).

Residue 16 to 26 (FSGGQDSTTCL) participates in ATP binding. Residues Cys-193, Cys-201, Cys-204, and Cys-207 each coordinate Zn(2+).

Belongs to the QueC family. The cofactor is Zn(2+).

It catalyses the reaction 7-carboxy-7-deazaguanine + NH4(+) + ATP = 7-cyano-7-deazaguanine + ADP + phosphate + H2O + H(+). Its pathway is purine metabolism; 7-cyano-7-deazaguanine biosynthesis. In terms of biological role, catalyzes the ATP-dependent conversion of 7-carboxy-7-deazaguanine (CDG) to 7-cyano-7-deazaguanine (preQ(0)). The polypeptide is 7-cyano-7-deazaguanine synthase (Pasteurella multocida (strain Pm70)).